A 304-amino-acid chain; its full sequence is MSDLPLPPAFRQLGHSGIAVSPIAWGMWRLAENGRTPADAAKLVHAALDAGINFLDTADIYGFDGSAGFGDAEALLGEVLAAEPALRERMILATKGGILPPLPYDQSADYLRKAIDDSLARLKVDVIDLWQIHRPDILAHPYEVARVLDDAVSSGKVRALGVSNFTKDQIAALNHFLGEKLATTQPEISPLRIDCFENGELDQAMMLGLTPMAWSPLGGGRLASPQTARDKAVADALDAVAQAQGVSRTVAAYSWLMAHPAGIVPIIGSQQAARIAEGAEALKVRWNRQDWYAVLVAARGERLP.

NADP(+) contacts are provided by Trp-28, Arg-29, and Asp-56. Tyr-61 acts as the Proton donor in catalysis. The D-glucose site is built by Tyr-61, His-133, and Arg-134. Positions 163, 164, 185, 215, 217, 219, 268, 269, 270, and 274 each coordinate NADP(+).

This sequence belongs to the aldo/keto reductase family.

The catalysed reaction is D-glucose + NADP(+) = 6-dehydro-D-glucose + NADPH + H(+). In terms of biological role, part of the alkanesulfonate monooxygenase (sulfo-ASMO) pathway, a D-sulfoquinovose degradation pathway that enables the complete utilization of all carbons within sulfoquinovose (SQ) with concomitant production of inorganic sulfite. Catalyzes the NADP-dependent reduction of 6-dehydro-D-glucose to D-glucose. Can also catalyze the reversible reaction, the formation of 6-dehydro-D-glucose from D-glucose in the presence of NADP(+). The polypeptide is 6-dehydroglucose reductase (Novosphingobium aromaticivorans (strain ATCC 700278 / DSM 12444 / CCUG 56034 / CIP 105152 / NBRC 16084 / F199)).